Here is a 246-residue protein sequence, read N- to C-terminus: MKIDFLTLFPEMFQGVLHSSILKQAQERGAVSFRVVNFREYSENKHKKVDDYPYGGGAGMVLSPQPLFDAVEDLTKKSSSTPRVILMCPQGETFTQRKAEELAQAEHLILLCGHYEGYDERIRSYLVTDELSIGDYVLTGGELGAMVIADSVTRLLPAVLGNETSAQTDSFSTGLLEYPQYTRPADFRGWKVPDVLLSGHHQNIERWRKEQSLKRTLERRPDLLEGRKLTEEEQELLDSIRKQQEK.

Residues glycine 113 and 133 to 138 (IGDYVL) each bind S-adenosyl-L-methionine.

The protein belongs to the RNA methyltransferase TrmD family. In terms of assembly, homodimer.

The protein localises to the cytoplasm. It catalyses the reaction guanosine(37) in tRNA + S-adenosyl-L-methionine = N(1)-methylguanosine(37) in tRNA + S-adenosyl-L-homocysteine + H(+). Specifically methylates guanosine-37 in various tRNAs. The polypeptide is tRNA (guanine-N(1)-)-methyltransferase (trmD) (Halalkalibacterium halodurans (strain ATCC BAA-125 / DSM 18197 / FERM 7344 / JCM 9153 / C-125) (Bacillus halodurans)).